The chain runs to 1081 residues: Psi-producing oxygenase A (1081 aa).

Positions 105–446 (TKSFLNMLWN…DGAFNDDDLV (342 aa)) are linoleate 8R-lipoxygenase. His202 contributes to the heme b binding site. Tyr374 is an active-site residue. Heme b is bound at residue His377. A 9,12-octadecadienoate 8-hydroperoxide 8R-isomerase region spans residues 654–1081 (IFISSHAACM…GELPQLKEDF (428 aa)).

It belongs to the peroxidase family. As to quaternary structure, homotetramer. It depends on heme b as a cofactor.

The catalysed reaction is (9Z,12Z)-octadecadienoate + O2 = (8R,9Z,12Z)-8-hydroperoxyoctadeca-9,12-dienoate. The enzyme catalyses (8R,9Z,12Z)-8-hydroperoxyoctadeca-9,12-dienoate = (5S,8R,9Z,12Z)-5,8-dihydroxyoctadeca-9,12-dienoate. Functionally, bifunctional heme-containing enzyme that oxidizes linoleic acid to (8R,9Z,12Z)-8-hydroperoxyoctadeca-9,12-dienoate (within the N-terminal heme peroxidase domain), which is subsequently isomerized to (5S,8R,9Z,12Z)-5,8-dihydroxyoctadeca-9,12-dienoate (within the C-terminal P450 heme thiolate domain). Oxidized unsaturated fatty acids, so-called oxylipins, derived from endogenous fatty acids, influence the development of the asexual conidiophores and sexual cleistothecia and regulate the secondary metabolism. These substances were collectively named psi factors and are primarily a mixture of hydroxylated oleic, linoleic and alpha-linolenic acids. They are termed psi-beta, psi-alpha, and psi-gamma, respectively. The polypeptide is Psi-producing oxygenase A (ppoA) (Emericella nidulans (Aspergillus nidulans)).